The primary structure comprises 427 residues: MESDKNGPARQENDIAEKESDIRYWTRVVCPSVRSLLHAAGSYTAEDIEAQMRTLREVVLPDLGPRPSRAPGPSYLFQGGCPFQLSINTTSKANAVRYVWEVLGERGHTSDDPLAMQTTRDTVSRLSAKFGLSTKWSDVLLSALELTTKEAQKAVEKMPEWILEHLEKGAVVPRIKNLPFGFVAFDLKESDVSIKLYITLKAREIFTGKSAADVIFDSLRNFTPAFKPEAIDMIQNFLSGLSEKMPLEVIAIDCVDEAHLSEARVKLYCHSTSNSFNTVKKWLTIGGKVKDENTLKGLQILRSMWHLFIQKPEGIPDDELETPVNLENALKHRMYFSFELKPGQDIPQVKTYLPIWRYAPSDEQAIDNFEAAFRQCHHPWGEDGTYGRIFRNALCAPPIHGDLAYIYCEKRGVYQTIYVTPPLLEED.

Substrate contacts are provided by Arg-97, Lys-195, Arg-264, Lys-266, Tyr-268, and Tyr-352.

The protein belongs to the tryptophan dimethylallyltransferase family.

It functions in the pathway secondary metabolite biosynthesis. In terms of biological role, indole diterpene prenyltransferase; part of the gene cluster that mediates the biosynthesis of paspalitrems, indole-diterpene (IDT) mycotoxins that are potent tremorgens in mammals. The geranylgeranyl diphosphate (GGPP) synthase idtG is proposed to catalyze the first step in IDT biosynthesis via catalysis of a series of iterative condensations of isopentenyl diphosphate (IPP) with dimethylallyl diphosphate (DMAPP), geranyl diphosphate (GPP), and farnesyl diphosphate (FPP), to form GGPP. Condensation of indole-3-glycerol phosphate with GGPP by the prenyltransferase idtC then forms 3-geranylgeranylindole (3-GGI). Epoxidation of the two terminal alkenes of the geranylgeranyl moiety by the FAD-dependent monooxygenase idtM, and cyclization by the terpene cyclase idtB then leads to the production of paspaline. The cytochrome P450 monooxygenase idtP then catalyzes oxidative elimination of the pendant methyl group at C-12 of paspaline and generates the C-10 ketone to yield 13-desoxypaxilline. The cytochrome P450 monooxygenase idtQ may catalyze the C-13 oxidation of 13-desoxypaxilline to afford paxilline. Considering that both paspalicine and paxilline were detected in C.paspali, idtQ also catalyzes the formation of paspalinine from 13-desoxypaxilline via paspalicine as an intermediate. Finally, the alpha-prenyltransferase idtF prenylates paspalinine at the C-20 or the C-21 positions to yield paspalitrems A and C, respectively. The hydroxylation of paspalitrem A at C-32 by a still unknown oxidase affords paspalitrem B. The polypeptide is Indole diterpene prenyltransferase idtF (Claviceps paspali (Rye ergot fungus)).